A 548-amino-acid chain; its full sequence is Membrane protein insertase YidC (548 aa).

A helical membrane pass occupies residues 6–26; the sequence is NLLVIALLFVSFMIWQAWEQD. The tract at residues 28 to 54 is disordered; that stretch reads NPQPQTQQTTQTTTTAAGSAADQGVPA. Over residues 29–42 the composition is skewed to low complexity; it reads PQPQTQQTTQTTTT. The next 4 membrane-spanning stretches (helical) occupy residues 350–370, 424–444, 458–478, and 499–519; these read FLGN…GIMY, FPLI…MGSI, LSAQ…MFFI, and PVIF…YYIV.

It belongs to the OXA1/ALB3/YidC family. Type 1 subfamily. Interacts with the Sec translocase complex via SecD. Specifically interacts with transmembrane segments of nascent integral membrane proteins during membrane integration.

Its subcellular location is the cell inner membrane. Functionally, required for the insertion and/or proper folding and/or complex formation of integral membrane proteins into the membrane. Involved in integration of membrane proteins that insert both dependently and independently of the Sec translocase complex, as well as at least some lipoproteins. Aids folding of multispanning membrane proteins. This Citrobacter koseri (strain ATCC BAA-895 / CDC 4225-83 / SGSC4696) protein is Membrane protein insertase YidC.